The chain runs to 622 residues: 1-deoxy-D-xylulose-5-phosphate synthase (622 aa).

Residues His-80 and 121 to 123 contribute to the thiamine diphosphate site; that span reads GHS. Asp-152 is a Mg(2+) binding site. Thiamine diphosphate-binding positions include 153–154, Asn-181, Tyr-288, and Glu-369; that span reads GA. Residue Asn-181 participates in Mg(2+) binding.

Belongs to the transketolase family. DXPS subfamily. As to quaternary structure, homodimer. Requires Mg(2+) as cofactor. The cofactor is thiamine diphosphate.

The catalysed reaction is D-glyceraldehyde 3-phosphate + pyruvate + H(+) = 1-deoxy-D-xylulose 5-phosphate + CO2. It participates in metabolic intermediate biosynthesis; 1-deoxy-D-xylulose 5-phosphate biosynthesis; 1-deoxy-D-xylulose 5-phosphate from D-glyceraldehyde 3-phosphate and pyruvate: step 1/1. Its function is as follows. Catalyzes the acyloin condensation reaction between C atoms 2 and 3 of pyruvate and glyceraldehyde 3-phosphate to yield 1-deoxy-D-xylulose-5-phosphate (DXP). This Psychromonas ingrahamii (strain DSM 17664 / CCUG 51855 / 37) protein is 1-deoxy-D-xylulose-5-phosphate synthase.